Reading from the N-terminus, the 546-residue chain is Thermolysin (546 aa).

Positions 1-25 (MNKRAMLGAIGLAFGLMAWPFGASA) are cleaved as a signal peptide. Positions 26–228 (KEKSMVWNEQ…EAKPGGGQPV (203 aa)) are cleaved as a propeptide — activation peptide. Residues D287, D289, Q291, and D368 each coordinate Ca(2+). A Zn(2+)-binding site is contributed by H372. Residue E373 is part of the active site. Residues H376 and E396 each contribute to the Zn(2+) site. Ca(2+)-binding residues include E407, N413, D415, E417, E420, Y423, T424, I427, and D430. H461 serves as the catalytic Proton donor.

It belongs to the peptidase M4 family. It depends on Ca(2+) as a cofactor. Requires Zn(2+) as cofactor.

It localises to the secreted. The enzyme catalyses Preferential cleavage: Xaa-|-Leu &gt; Xaa-|-Phe.. In terms of biological role, extracellular zinc metalloprotease. This Alicyclobacillus acidocaldarius subsp. acidocaldarius (Bacillus acidocaldarius) protein is Thermolysin.